Consider the following 447-residue polypeptide: Innexin-5 (447 aa).

The next 4 membrane-spanning stretches (helical) occupy residues 30-47 (TSTL…SQYV), 108-128 (QWIP…SIIW), 198-218 (ALYL…FWIL), and 283-303 (VYVF…CSLA). The segment at 389–447 (KKDDDSALPASAPVDLQEDDDDDTPFPPPTKAVAETLTSDDEEEETDVDSPDTTATLPR) is disordered. Residues 426-438 (TSDDEEEETDVDS) are compositionally biased toward acidic residues.

It belongs to the pannexin family.

It is found in the cell membrane. Its subcellular location is the cell junction. The protein localises to the gap junction. Its function is as follows. Structural component of the gap junctions. This Caenorhabditis elegans protein is Innexin-5 (inx-5).